We begin with the raw amino-acid sequence, 156 residues long: Small ribosomal subunit protein uS7 (156 aa).

The protein belongs to the universal ribosomal protein uS7 family. Part of the 30S ribosomal subunit. Contacts proteins S9 and S11.

One of the primary rRNA binding proteins, it binds directly to 16S rRNA where it nucleates assembly of the head domain of the 30S subunit. Is located at the subunit interface close to the decoding center, probably blocks exit of the E-site tRNA. In Desulfitobacterium hafniense (strain DSM 10664 / DCB-2), this protein is Small ribosomal subunit protein uS7.